A 504-amino-acid polypeptide reads, in one-letter code: Anaerobic nitric oxide reductase transcription regulator NorR (504 aa).

A 4-aspartylphosphate modification is found at D57. A Sigma-54 factor interaction domain is found at 187–416 (MIGLSPGMTQ…LEHAIHRAVV (230 aa)). ATP contacts are provided by residues 215–222 (GETGTGKE) and 278–287 (ADNGTLFLDE). Residues 479 to 498 (WAACARMLETDVANLHRLAK) constitute a DNA-binding region (H-T-H motif).

The protein operates within nitrogen metabolism; nitric oxide reduction. Its function is as follows. Required for the expression of anaerobic nitric oxide (NO) reductase, acts as a transcriptional activator for at least the norVW operon. Activation also requires sigma-54. This Escherichia coli (strain K12 / MC4100 / BW2952) protein is Anaerobic nitric oxide reductase transcription regulator NorR.